Here is a 243-residue protein sequence, read N- to C-terminus: Homeobox protein goosecoid isoform A (243 aa).

A DNA-binding region (homeobox) is located at residues 148–207 (KRRHRTIFTDEQLEALENLFQETKYPDVGTREQLARRVHLREEKVEVWFKNRRAKWRRQK). The disordered stretch occupies residues 201–243 (AKWRRQKRSSSEESENAQKWNKSSKNSAEKADEQVKSDLDSDS). Residues 217-226 (AQKWNKSSKN) show a composition bias toward polar residues. The span at 227–243 (SAEKADEQVKSDLDSDS) shows a compositional bias: basic and acidic residues.

Belongs to the paired homeobox family. Bicoid subfamily. At the start of gastrulation, it is found in a patch of cells encompassing 60 degrees of arc on the dorsal marginal zone.

It is found in the nucleus. Functionally, plays a central role in executing Spemann's organizer phenomenon (the dorsal blastopore lip of the early Xenopus laevis gastrula can organize a complete secondary body axis when transplanted to another embryo). The chain is Homeobox protein goosecoid isoform A (gsc-a) from Xenopus laevis (African clawed frog).